The following is a 759-amino-acid chain: MVHFLHPGHTPRNIVPPDAQKDALGCCVVQEEASPYTLVNICLNVLIANLEKLCSERPDGTLCLPEHWSFPQEVAERFLRVMTWQGKLTDRTASIFRGNQMKLKLVNIQKAKISTAAFIKAFCRHKLIELNATAVHADLPVPDIISGLCSNRWIQQNLQCLLLDSTSIPQNSRLLFFSQLTGLRILSVFNVCFHTEDLANVSQLPRLESLDISNTLVTDISALLTCKDRLKSLTMHYLKCLAMTKSQILAVIRELKCLLHLDISDHRQLKSDLAFHLLQQKDILPNVVSLDISGGNCITDEAVELFIRLRPAMQFVGLLATDAGSSDFFTTKQGLRVAGGASMSQISEALSRYRNRSCFVKEALHRLFTETFSMEVTMPAILKLVAIGMRNHPLDLRVQFTASACALNLTRQGLAKGMPVRLLSEVTCLLFKALKNFPHYQQLQKNCLLSLTNSRILVDVPFDRFDAAKFVMRWLCKHENPKMQTMAVSVTSILALQLSPEQTAQLEELFMAVKELLAIVKQKTTENLDDVTFLFTLKALWNLTDGSPAACKHFIENQGLQIFIQVLETFSESAIQSKVLGLLNNIAEVRELSSKLVTEDVLKHINSLLCSREMEVSYFAAGIIAHLTSDRQLWISRDFQRRTLLQDLHATIQNWPSSSCKMTALVTYRSFKTFFPLLGNFSQPEVQLWALWAMYHVCSKNPSKYCKMLVEEEGLQLLCDIQEHSEATPKAQQIAASILDDFRMHFMNYQRPTLCQMPF.

3 LRR repeats span residues 204-227 (LPRL…LTCK), 235-260 (MHYL…CLLH), and 490-513 (VTSI…FMAV).

This sequence belongs to the zyg-11 family.

Its function is as follows. Probably acts as a target recruitment subunit in an E3 ubiquitin ligase complex ZYGA-CUL2-elongin BC. This is Protein zyg-11 homolog A (ZYG11A) from Homo sapiens (Human).